Here is a 585-residue protein sequence, read N- to C-terminus: SLAIN motif-containing protein-like (585 aa).

Disordered stretches follow at residues 1 to 34 (MVVP…PNLT), 55 to 125 (NQTL…RVEE), 324 to 365 (QDYA…EDEC), 402 to 476 (PRLS…SDGQ), and 492 to 585 (GSMS…DGCY). Residues 68 to 83 (GGTNNSNLKAGSNINN) are compositionally biased toward polar residues. Residues 327-345 (ASTSASRRSSSASLQSLRR) are compositionally biased toward low complexity. Residues 351 to 365 (QEFDSYSQEDEEDEC) are compositionally biased toward acidic residues. 3 stretches are compositionally biased toward polar residues: residues 425-434 (PNLTPRTSLR), 441-476 (NSRS…SDGQ), and 549-563 (ASPS…TPRS). The segment covering 575–585 (LTDESWKDGCY) has biased composition (basic and acidic residues).

The protein belongs to the SLAIN motif-containing family.

The polypeptide is SLAIN motif-containing protein-like (Danio rerio (Zebrafish)).